The following is a 1271-amino-acid chain: SR-related and CTD-associated factor 8 (1271 aa).

The region spanning 1–139 (MEAVKTFNSE…PLLDMAAGIP (139 aa)) is the CID domain. The residue at position 6 (threonine 6) is a Phosphothreonine. Lysine 18 participates in a covalent cross-link: Glycyl lysine isopeptide (Lys-Gly) (interchain with G-Cter in SUMO1). Over residues 270–283 (GEDSEHSEEPKKEI) the composition is skewed to basic and acidic residues. Disordered regions lie at residues 270–289 (GEDSEHSEEPKKEIPASQLS), 322–354 (QQQPQKATPQDSQEGTFGSEHSASPSQGSSQQH), and 384–468 (EEVF…PPIR). Serine 273 carries the phosphoserine modification. Over residues 327–354 (KATPQDSQEGTFGSEHSASPSQGSSQQH) the composition is skewed to polar residues. The span at 394 to 443 (VAVRSRSRTHSRSRSRSPRKRRSRSRSGSRKRKHRKRSRSRSRERKRKSS) shows a compositional bias: basic residues. Residues 447-461 (SSERRAREREKERQK) are compositionally biased toward basic and acidic residues. The 75-residue stretch at 477–551 (TTLWVGQVDK…KVIKIAWALN (75 aa)) folds into the RRM domain. At threonine 615 the chain carries Phosphothreonine. Residues serine 617 and serine 779 each carry the phosphoserine modification. The segment at 899 to 918 (TQPPAGPQNLPPLSIPNQRM) is disordered. A compositionally biased stretch (pro residues) spans 902-912 (PAGPQNLPPLS). Asymmetric dimethylarginine occurs at positions 917, 927, and 938. Composition is skewed to pro residues over residues 945–956 (GIPPQRGIPPPS) and 963–972 (HPPPRGPFPP). A disordered region spans residues 945-1064 (GIPPQRGIPP…DGRDHFGRPP (120 aa)). Basic and acidic residues-rich tracts occupy residues 1011 to 1027 (EGDRDYRFPPIETRESI) and 1034 to 1064 (DVRDVVGRPIDPREGPGRPPLDGRDHFGRPP). Residue arginine 1073 is modified to Asymmetric dimethylarginine. The disordered stretch occupies residues 1198–1271 (YFEGATSQRK…VVESTETEGT (74 aa)). Positions 1255 to 1271 (ADIESEPVVESTETEGT) are enriched in acidic residues.

As to quaternary structure, interacts with POLR2A; via C-terminal heptapeptide repeat domain (CTD) phosphorylated at 'Ser-2' and 'Ser-5'. Identified in a complex with CDC5L and other spliceosomal proteins.

It is found in the nucleus. The protein localises to the nucleus matrix. Its function is as follows. Anti-terminator protein required to prevent early mRNA termination during transcription. Together with SCAF4, acts by suppressing the use of early, alternative poly(A) sites, thereby preventing the accumulation of non-functional truncated proteins. Mechanistically, associates with the phosphorylated C-terminal heptapeptide repeat domain (CTD) of the largest RNA polymerase II subunit (POLR2A), and subsequently binds nascent RNA upstream of early polyadenylation sites to prevent premature mRNA transcript cleavage and polyadenylation. Independently of SCAF4, also acts as a positive regulator of transcript elongation. The sequence is that of SR-related and CTD-associated factor 8 from Homo sapiens (Human).